Reading from the N-terminus, the 474-residue chain is PRAME family member 1 (474 aa).

The LRR 1; degenerate repeat unit spans residues 97–124 (RWKLQVLDLRDVDENFWARWPGAWALSC). The stretch at 179–203 (HLCCSKLVNYLTPIKYLRKSLKIIY) is one LRR 2; degenerate repeat. The LRR 3; degenerate repeat unit spans residues 204–230 (LNSIQELEIRNMSWPRLIRKLRCYLKE). An LRR 4; degenerate repeat occupies 231-265 (MKNLRKLVFSRCHHYTSDNELEGRLVAKFSSVFLR). 5 LRR repeats span residues 266 to 291 (LEHL…IRCL), 292 to 323 (QNPL…GYLK), 324 to 342 (HLNL…PLGA), 348 to 375 (AASL…GLSR), and 376 to 400 (CSQL…LLRH).

This sequence belongs to the PRAME family.

This is PRAME family member 1 from Homo sapiens (Human).